A 540-amino-acid polypeptide reads, in one-letter code: Serine/threonine-protein phosphatase ppzA (540 aa).

Disordered regions lie at residues 1 to 108 and 120 to 140; these read MGQS…KRGH and VDHV…STQK. Composition is skewed to polar residues over residues 15 to 24 and 45 to 54; these read SLQSYPSFSR and SDSPRGSTAG. Over residues 62–88 the composition is skewed to low complexity; that stretch reads AASVKSTTSRRSSTNQSVQSPDDTPSQ. Over residues 89–98 the composition is skewed to pro residues; sequence PDAPEPPPSP. A compositionally biased stretch (low complexity) spans 127–136; sequence PPTGAAPTGP. Mn(2+) contacts are provided by D239, H241, D267, and N299. Positions 258–540 constitute a Phosphatase tensin-type domain; that stretch reads PASNYLFLGD…SLVTSWGISR (283 aa). H300 (proton donor) is an active-site residue. Mn(2+)-binding residues include H348 and H423.

It belongs to the PPP phosphatase family. PP-Z subfamily. As to quaternary structure, interacts with at least 54 proteins, of which 31 are detected only after iron starvation and 22 are detected only in control conditions. Only the regulatory subunit of the protein phosphatase PP1 (Afu1g04800/AFUB_005140) interacts with ppzA in both conditions. It depends on Mn(2+) as a cofactor.

It localises to the cytoplasm. It catalyses the reaction O-phospho-L-seryl-[protein] + H2O = L-seryl-[protein] + phosphate. The enzyme catalyses O-phospho-L-threonyl-[protein] + H2O = L-threonyl-[protein] + phosphate. Its function is as follows. Catalytic subunit of protein phosphatase Z (PPZ) involved in iron assimilation. Regulates secondary metabolites production, including gliotoxin, pyripyropene A, fumagillin, fumiquinazoline A, triacetyl-fusarinine C, and helvolic acid. Plays a key role in pathogenicity. This Aspergillus fumigatus (strain CBS 144.89 / FGSC A1163 / CEA10) (Neosartorya fumigata) protein is Serine/threonine-protein phosphatase ppzA.